The following is a 290-amino-acid chain: UPF0750 membrane protein YdeO (290 aa).

The next 5 membrane-spanning stretches (helical) occupy residues 18–38, 56–76, 83–103, 112–132, and 165–185; these read IIMV…VLIP, LFNL…VWLG, SFAL…SFFH, DTLL…GLAL, and LFVF…LSVI.

The protein belongs to the UPF0750 family.

The protein localises to the cell membrane. This chain is UPF0750 membrane protein YdeO (ydeO), found in Bacillus subtilis (strain 168).